Consider the following 220-residue polypeptide: Large ribosomal subunit protein eL15 (220 aa).

This sequence belongs to the eukaryotic ribosomal protein eL15 family.

This chain is Large ribosomal subunit protein eL15, found in Staphylothermus marinus (strain ATCC 43588 / DSM 3639 / JCM 9404 / F1).